A 312-amino-acid chain; its full sequence is Dihydroorotate dehydrogenase B (NAD(+)), catalytic subunit (312 aa).

Residues serine 21 and 45–46 (KA) contribute to the FMN site. Residues lysine 45 and 69–73 (NAIGL) contribute to the substrate site. The FMN site is built by asparagine 99 and asparagine 127. Asparagine 127 is a substrate binding site. Cysteine 130 acts as the Nucleophile in catalysis. Residues lysine 165 and isoleucine 191 each contribute to the FMN site. A substrate-binding site is contributed by 192-193 (NT). Residues glycine 217, 243–244 (GG), and 265–266 (GT) contribute to the FMN site.

Belongs to the dihydroorotate dehydrogenase family. Type 1 subfamily. As to quaternary structure, heterotetramer of 2 PyrK and 2 PyrD type B subunits. FMN is required as a cofactor.

It localises to the cytoplasm. It catalyses the reaction (S)-dihydroorotate + NAD(+) = orotate + NADH + H(+). It participates in pyrimidine metabolism; UMP biosynthesis via de novo pathway; orotate from (S)-dihydroorotate (NAD(+) route): step 1/1. Functionally, catalyzes the conversion of dihydroorotate to orotate with NAD(+) as electron acceptor. In Anoxybacillus flavithermus (strain DSM 21510 / WK1), this protein is Dihydroorotate dehydrogenase B (NAD(+)), catalytic subunit (pyrD).